We begin with the raw amino-acid sequence, 155 residues long: DNA gyrase inhibitor (155 aa).

This sequence belongs to the DNA gyrase inhibitor family. In terms of assembly, interacts with DNA gyrase.

It is found in the cytoplasm. Its function is as follows. Inhibits the supercoiling activity of DNA gyrase. Acts by inhibiting DNA gyrase at an early step, prior to (or at the step of) binding of DNA by the gyrase. It protects cells against toxins that target DNA gyrase, by inhibiting activity of these toxins and reducing the formation of lethal double-strand breaks in the cell. This is DNA gyrase inhibitor from Salmonella typhi.